Here is a 73-residue protein sequence, read N- to C-terminus: Translational regulator CsrA (73 aa).

This sequence belongs to the CsrA/RsmA family. As to quaternary structure, homodimer; the beta-strands of each monomer intercalate to form a hydrophobic core, while the alpha-helices form wings that extend away from the core.

It is found in the cytoplasm. Its function is as follows. A translational regulator that binds mRNA to regulate translation initiation and/or mRNA stability. Usually binds in the 5'-UTR at or near the Shine-Dalgarno sequence preventing ribosome-binding, thus repressing translation. Its main target seems to be the major flagellin gene, while its function is anatagonized by FliW. This chain is Translational regulator CsrA, found in Thermosipho africanus (strain TCF52B).